An 802-amino-acid polypeptide reads, in one-letter code: Ent-copalyl diphosphate synthase, chloroplastic (802 aa).

A chloroplast-targeting transit peptide spans 1-60 (MSLQYHVLNSIPSTTFLSSTKTTISSSFLTISGSPLNVARDKSRSGSIHCSKLRTQEYIN). Lysine 245 contributes to the substrate binding site. Mg(2+) is bound by residues aspartate 377 and aspartate 379. A DXDD motif motif is present at residues 377-380 (DIDD). Lysine 463 provides a ligand contact to substrate.

This sequence belongs to the terpene synthase family. Tpsc subfamily. The cofactor is Mg(2+). In terms of processing, the N-terminus is blocked. As to expression, expressed in roots, leaves, flowers and also in siliques.

Its subcellular location is the plastid. It is found in the chloroplast. It carries out the reaction (2E,6E,10E)-geranylgeranyl diphosphate = ent-copalyl diphosphate. It participates in plant hormone biosynthesis; gibberellin biosynthesis. Its activity is regulated as follows. Inhibited by high concentrations of magnesium. Functionally, catalyzes the conversion of geranylgeranyl diphosphate to the gibberellin precursor ent-copalyl diphosphate. The polypeptide is Ent-copalyl diphosphate synthase, chloroplastic (GA1) (Arabidopsis thaliana (Mouse-ear cress)).